The following is a 538-amino-acid chain: Chaperonin GroEL (538 aa).

Residues 29-32 (TIGP), 86-90 (DGTTT), Gly-413, 476-478 (NAA), and Asp-492 contribute to the ATP site.

This sequence belongs to the chaperonin (HSP60) family. Forms a cylinder of 14 subunits composed of two heptameric rings stacked back-to-back. Interacts with the co-chaperonin GroES.

Its subcellular location is the cytoplasm. It carries out the reaction ATP + H2O + a folded polypeptide = ADP + phosphate + an unfolded polypeptide.. Together with its co-chaperonin GroES, plays an essential role in assisting protein folding. The GroEL-GroES system forms a nano-cage that allows encapsulation of the non-native substrate proteins and provides a physical environment optimized to promote and accelerate protein folding. The sequence is that of Chaperonin GroEL from Staphylococcus aureus (strain Mu3 / ATCC 700698).